A 526-amino-acid polypeptide reads, in one-letter code: Bifunctional purine biosynthesis protein PurH (526 aa).

The 147-residue stretch at 1–147 (MSVIKRALIS…KNWKHVAIVT (147 aa)) folds into the MGS-like domain.

This sequence belongs to the PurH family.

The catalysed reaction is (6R)-10-formyltetrahydrofolate + 5-amino-1-(5-phospho-beta-D-ribosyl)imidazole-4-carboxamide = 5-formamido-1-(5-phospho-D-ribosyl)imidazole-4-carboxamide + (6S)-5,6,7,8-tetrahydrofolate. It carries out the reaction IMP + H2O = 5-formamido-1-(5-phospho-D-ribosyl)imidazole-4-carboxamide. It participates in purine metabolism; IMP biosynthesis via de novo pathway; 5-formamido-1-(5-phospho-D-ribosyl)imidazole-4-carboxamide from 5-amino-1-(5-phospho-D-ribosyl)imidazole-4-carboxamide (10-formyl THF route): step 1/1. The protein operates within purine metabolism; IMP biosynthesis via de novo pathway; IMP from 5-formamido-1-(5-phospho-D-ribosyl)imidazole-4-carboxamide: step 1/1. The chain is Bifunctional purine biosynthesis protein PurH from Neisseria gonorrhoeae (strain ATCC 700825 / FA 1090).